The chain runs to 335 residues: Cytoskeleton protein RodZ (335 aa).

The Cytoplasmic portion of the chain corresponds to 1–111 (MNTEATHDQN…LGKRRKKRDG (111 aa)). Positions 19-71 (LRNAREQLGLSQQAVAERLCLKVSTVRDIEEDKAPADLASTFLRGYIRSYARL) constitute an HTH cro/C1-type domain. The segment at residues 30–49 (QQAVAERLCLKVSTVRDIEE) is a DNA-binding region (H-T-H motif). The chain crosses the membrane as a helical; Signal-anchor for type II membrane protein span at residues 112-132 (WLMTFTWLVLFVVIGLSGAWW). The Periplasmic portion of the chain corresponds to 133-335 (WQDHKAQQEE…TLNAEQSPAQ (203 aa)). The segment covering 148–164 (DQSSAELNNNQSQSVPL) has biased composition (polar residues). The disordered stretch occupies residues 148-244 (DQSSAELNNN…PLPTDQAGVT (97 aa)). Low complexity-rich tracts occupy residues 165–205 (DTST…DPQQ) and 217–239 (DTAA…LPTD).

It belongs to the RodZ family.

It localises to the cell inner membrane. Functionally, cytoskeletal protein that is involved in cell-shape control through regulation of the length of the long axis. The sequence is that of Cytoskeleton protein RodZ from Escherichia coli O81 (strain ED1a).